The following is a 203-amino-acid chain: ADP-ribosylation factor-like protein 6-interacting protein 1 (203 aa).

Residues 1-41 lie on the Cytoplasmic side of the membrane; sequence MAEGDNRSTNLLAAETASLEEQLQGWGEVMLMADKVLRWER. A helical membrane pass occupies residues 42–62; that stretch reads AWFPPAIMGVVSLVFLIIYYL. Residues 63-65 lie on the Lumenal side of the membrane; that stretch reads DPS. Residues 66–86 form a helical membrane-spanning segment; the sequence is VLSGVSCFVMFLCLADYLVPI. Topologically, residues 87–133 are cytoplasmic; it reads LAPRIFGSNKWTTEQQQRFHEICSNLVKTRRRAVGWWKRLFTLKEEK. Residues 134-175 form a helical membrane-spanning segment; the sequence is PKMYFMTMIVSLAAVAWVGQQVHNLLLTYLIVTSLLLLPGLN. Residues 176–203 lie on the Lumenal side of the membrane; sequence QHGIILKYIGMAKREINKLLKQKEKKNE.

This sequence belongs to the ARL6ip family. In terms of assembly, homooligomer. Heterodimer with ARL6IP5. Interacts with ARL6. Interacts with TMEM33. Interacts with ATL1. Expressed in all hematopoietic cell lineages, but the highest level of expression is found in early myeloid progenitor cells. Expressed in brain, bone marrow, thymus and lung. Expressed at low level in liver, kidney and spleen. Not detected in heart.

It localises to the endomembrane system. It is found in the endoplasmic reticulum membrane. Its subcellular location is the endoplasmic reticulum. Positively regulates SLC1A1/EAAC1-mediated glutamate transport by increasing its affinity for glutamate in a PKC activity-dependent manner. Promotes the catalytic efficiency of SLC1A1/EAAC1 probably by reducing its interaction with ARL6IP5, a negative regulator of SLC1A1/EAAC1-mediated glutamate transport. Plays a role in the formation and stabilization of endoplasmic reticulum tubules. Negatively regulates apoptosis, possibly by modulating the activity of caspase-9 (CASP9). Inhibits cleavage of CASP9-dependent substrates and downstream markers of apoptosis but not CASP9 itself. May be involved in protein transport, membrane trafficking, or cell signaling during hematopoietic maturation. The protein is ADP-ribosylation factor-like protein 6-interacting protein 1 (ARL6IP1) of Homo sapiens (Human).